A 161-amino-acid chain; its full sequence is ATP synthase subunit b (161 aa).

A helical membrane pass occupies residues 10 to 29; sequence SVIQLMSFFLLLYILKKFLY.

This sequence belongs to the ATPase B chain family. As to quaternary structure, F-type ATPases have 2 components, F(1) - the catalytic core - and F(0) - the membrane proton channel. F(1) has five subunits: alpha(3), beta(3), gamma(1), delta(1), epsilon(1). F(0) has three main subunits: a(1), b(2) and c(10-14). The alpha and beta chains form an alternating ring which encloses part of the gamma chain. F(1) is attached to F(0) by a central stalk formed by the gamma and epsilon chains, while a peripheral stalk is formed by the delta and b chains.

The protein resides in the cell inner membrane. F(1)F(0) ATP synthase produces ATP from ADP in the presence of a proton or sodium gradient. F-type ATPases consist of two structural domains, F(1) containing the extramembraneous catalytic core and F(0) containing the membrane proton channel, linked together by a central stalk and a peripheral stalk. During catalysis, ATP synthesis in the catalytic domain of F(1) is coupled via a rotary mechanism of the central stalk subunits to proton translocation. Its function is as follows. Component of the F(0) channel, it forms part of the peripheral stalk, linking F(1) to F(0). This chain is ATP synthase subunit b, found in Thermosipho melanesiensis (strain DSM 12029 / CIP 104789 / BI429).